The following is a 411-amino-acid chain: Mitogen-activated protein kinase 8 (411 aa).

Residues 26-321 enclose the Protein kinase domain; that stretch reads YQNLKPIGSG…VDEALQHPYI (296 aa). Residues 32-40 and Lys-55 contribute to the ATP site; that span reads IGSGAQGIV. Cys-116 carries the post-translational modification S-nitrosocysteine; in inhibited form. Asp-151 serves as the catalytic Proton acceptor. At Thr-183 the chain carries Phosphothreonine; by MAP2K7. A TXY motif is present at residues 183–185; sequence TPY. Tyr-185 carries the phosphotyrosine; by MAP2K4 modification. Residues 368–411 form a disordered region; the sequence is KNGVIRGQPSPLGAAVINGSQHPVSSPSVNDMSSMSTDPTLASD. Position 377 is a phosphoserine (Ser-377). A compositionally biased stretch (low complexity) spans 390–403; that stretch reads PVSSPSVNDMSSMS.

This sequence belongs to the protein kinase superfamily. CMGC Ser/Thr protein kinase family. MAP kinase subfamily. In terms of assembly, forms a complex with MAPK8IP1 and ARHGEF28. Found in a complex with SH3RF1, RAC1, MAP3K11/MLK3, MAP2K7/MKK7 and MAPK8IP1/JIP1. Found in a complex with SH3RF1, RAC2, MAP3K7/TAK1, MAP2K7/MKK7, MAPK8IP1/JIP1 and MAPK9/JNK2. Binds to at least four scaffolding proteins, MAPK8IP1/JIP-1, MAPK8IP2/JIP-2, MAPK8IP3/JIP-3/JSAP1 and SPAG9/MAPK8IP4/JIP-4. These proteins also bind other components of the JNK signaling pathway. Interacts with TP53, WWOX. Interacts with JAMP. Interacts with NFATC4. Interacts (phosphorylated form) with NFE2; the interaction phosphorylates NFE2 in undifferentiated cells. Interacts with MECOM; regulates JNK signaling. Interacts with PIN1; this interaction mediates MAPK8 conformational changes leading to the binding of MAPK8 to its substrates. Interacts with HSF1 (via D domain and preferentially with hyperphosphorylated form); this interaction occurs under both normal growth conditions and immediately upon heat shock. Interacts with STMN2, STMN3 and STMN4. Interacts with GRIPAP1. Interacts with POU5F1; phosphorylates POU5F1 at 'Ser-347'. Interacts with HSF4. The cofactor is Mg(2+). In terms of processing, dually phosphorylated on Thr-183 and Tyr-185 by MAP2K7 and MAP2K4, which activates the enzyme. Phosphorylated by TAOK2. Phosphorylated form is more concentrated at synapses than none-phosphorylated. Nitrosylated upon IFN-gamma-induced endogenous NO production, which inhibits the enzyme. May be phosphorylated at Thr-183 and Tyr-185 by MAP3K1/MEKK1.

The protein localises to the cytoplasm. The protein resides in the nucleus. It is found in the synapse. It catalyses the reaction L-seryl-[protein] + ATP = O-phospho-L-seryl-[protein] + ADP + H(+). The catalysed reaction is L-threonyl-[protein] + ATP = O-phospho-L-threonyl-[protein] + ADP + H(+). Its activity is regulated as follows. Activated by threonine and tyrosine phosphorylation by either of two dual specificity kinases, MAP2K4 and MAP2K7. MAP2K4 shows a strong preference for Tyr-185 while MAP2K7 phosphorylates Tyr-183 preferentially. Inhibited by dual specificity phosphatases, such as DUSP1. Inhibited by SERPINB3. Inhibited by IFN-gamma-induced S-nitrosylation. Serine/threonine-protein kinase involved in various processes such as cell proliferation, differentiation, migration, transformation and programmed cell death. Extracellular stimuli such as pro-inflammatory cytokines or physical stress stimulate the stress-activated protein kinase/c-Jun N-terminal kinase (SAP/JNK) signaling pathway. In this cascade, two dual specificity kinases MAP2K4/MKK4 and MAP2K7/MKK7 phosphorylate and activate MAPK8/JNK1. In turn, MAPK8/JNK1 phosphorylates a number of transcription factors, primarily components of AP-1 such as JUN, JDP2 and ATF2 and thus regulates AP-1 transcriptional activity. Phosphorylates the replication licensing factor CDT1, inhibiting the interaction between CDT1 and the histone H4 acetylase HBO1 to replication origins. Loss of this interaction abrogates the acetylation required for replication initiation. Promotes stressed cell apoptosis by phosphorylating key regulatory factors including p53/TP53 and Yes-associates protein YAP1. In T-cells, MAPK8 and MAPK9 are required for polarized differentiation of T-helper cells into Th1 cells. Contributes to the survival of erythroid cells by phosphorylating the antagonist of cell death BAD upon EPO stimulation. Mediates starvation-induced BCL2 phosphorylation, BCL2 dissociation from BECN1, and thus activation of autophagy. Phosphorylates STMN2 and hence regulates microtubule dynamics, controlling neurite elongation in cortical neurons. In the developing brain, through its cytoplasmic activity on STMN2, negatively regulates the rate of exit from multipolar stage and of radial migration from the ventricular zone. Phosphorylates several other substrates including heat shock factor protein 4 (HSF4), the deacetylase SIRT1, ELK1, or the E3 ligase ITCH. Phosphorylates the CLOCK-BMAL1 heterodimer and plays a role in the regulation of the circadian clock. Phosphorylates the heat shock transcription factor HSF1, suppressing HSF1-induced transcriptional activity. Phosphorylates POU5F1, which results in the inhibition of POU5F1's transcriptional activity and enhances its proteasomal degradation. Phosphorylates JUND and this phosphorylation is inhibited in the presence of MEN1. In neurons, phosphorylates SYT4 which captures neuronal dense core vesicles at synapses. Phosphorylates EIF4ENIF1/4-ET in response to oxidative stress, promoting P-body assembly. Phosphorylates SIRT6 in response to oxidative stress, stimulating its mono-ADP-ribosyltransferase activity. Phosphorylates NLRP3, promoting assembly of the NLRP3 inflammasome. Phosphorylates ALKBH5 in response to reactive oxygen species (ROS), promoting ALKBH5 sumoylation and inactivation. The sequence is that of Mitogen-activated protein kinase 8 (Mapk8) from Rattus norvegicus (Rat).